Consider the following 294-residue polypeptide: Ribosomal RNA small subunit methyltransferase H (294 aa).

S-adenosyl-L-methionine contacts are provided by residues 40 to 42 (GGH), Asp59, Phe86, Asp102, and Gln109.

This sequence belongs to the methyltransferase superfamily. RsmH family.

It is found in the cytoplasm. It catalyses the reaction cytidine(1402) in 16S rRNA + S-adenosyl-L-methionine = N(4)-methylcytidine(1402) in 16S rRNA + S-adenosyl-L-homocysteine + H(+). In terms of biological role, specifically methylates the N4 position of cytidine in position 1402 (C1402) of 16S rRNA. This is Ribosomal RNA small subunit methyltransferase H from Cyanothece sp. (strain PCC 7425 / ATCC 29141).